The sequence spans 860 residues: MARGIQGVMMRGFGARDHQATVVSTEAITPNLLRLRMVSPTLFEDAVAEPTSWLRFWFPDPAGSKTEFQRAYTMSEMSPETGEFAIDVVLHEPAGPASRWARSAKPGDAIAVMTLGSAGFSVPEDPPAGYLLIGDAAATPAINGIIGVVPHDIPIEVYLEEHDENDRLIPIAEHPRMRVHWVVREDATSLAGAIEARDWSNWYCWVTPEAGSLKHLRTRLRDEFGFPKAELHPQAYWTEGRAMGTKRGDDDKTPEVNPAPRADKPEAPAPAAAGRGNWRAQAAGRLLAPLKTTLIISGVLQAIITLVQLAPFVLLVELARLLLSGASSDRLWTLGVVAISLLGTGSFLAAALTLWLHLVDARFARDLRTGLLTKMSRLPLGWFTARGSGSIKQLVQDDTLSLHYLITHAIPDAVAAVIAPVAVLVYLFVVDWRLALVMFVPVLIYLVLMTVMTIQSGPKIAQSQRWAERMSAEAGAYLEGQPVVRVFGGAAASSFRRRLDEYIGFLVAWQKPFTGKKSMMDLVTRPGTFLWLIVAVGTPMITSGAMDPVDILPFLLLGTTFGVRLLGIAYGLGGIRGGMLAARRIQTTLDETELVIREQTGKRDGEPAVVFDNVTFGYRPDIPVLHDISLQLTPGTVTALVGPSGSGKSTLAALLARFHDVDAGAIRLGGRDIRTLTADELYRQVGFVLQDTQLVGGTVAENIALADPDASIERIQDAARDAQIHDRIMRLPNGYDTPLGAASSLSGGEKQRLTIARAILADTPVLILDEATAFADPESEYLVQQALNRLTRDRTVLVIAHRLHTITHADQIVVLEGGRIVETGTHERLLDAAGRYRQLWETGQRPALATAAGPTGEAVR.

Over 1-293 (MARGIQGVMM…GRLLAPLKTT (293 aa)) the chain is Cytoplasmic. The 110-residue stretch at 15 to 124 (ARDHQATVVS…LGSAGFSVPE (110 aa)) folds into the FAD-binding FR-type domain. Residues 70–73 (RAYT), 87–91 (DVVLH), 97–98 (AS), and 238–240 (TEG) each bind FAD. The interval 242–275 (AMGTKRGDDDKTPEVNPAPRADKPEAPAPAAAGR) is disordered. The helical transmembrane segment at 294–314 (LIISGVLQAIITLVQLAPFVL) threads the bilayer. The 283-residue stretch at 295 to 577 (IISGVLQAII…IAYGLGGIRG (283 aa)) folds into the ABC transmembrane type-1 domain. The Periplasmic segment spans residues 315–335 (LVELARLLLSGASSDRLWTLG). Residues 336 to 356 (VVAISLLGTGSFLAAALTLWL) form a helical membrane-spanning segment. Residues 357–409 (HLVDARFARDLRTGLLTKMSRLPLGWFTARGSGSIKQLVQDDTLSLHYLITHA) lie on the Cytoplasmic side of the membrane. A helical membrane pass occupies residues 410–430 (IPDAVAAVIAPVAVLVYLFVV). The Periplasmic portion of the chain corresponds to 431 to 433 (DWR). The helical transmembrane segment at 434 to 454 (LALVMFVPVLIYLVLMTVMTI) threads the bilayer. At 455–525 (QSGPKIAQSQ…KKSMMDLVTR (71 aa)) the chain is on the cytoplasmic side. The helical transmembrane segment at 526–546 (PGTFLWLIVAVGTPMITSGAM) threads the bilayer. Residues 547 to 550 (DPVD) are Periplasmic-facing. The helical transmembrane segment at 551–571 (ILPFLLLGTTFGVRLLGIAYG) threads the bilayer. Over 572 to 860 (LGGIRGGMLA…AAGPTGEAVR (289 aa)) the chain is Cytoplasmic. One can recognise an ABC transporter domain in the interval 609–842 (VVFDNVTFGY…AGRYRQLWET (234 aa)). Residue 642–649 (GPSGSGKS) participates in ATP binding.

This sequence belongs to the ABC transporter superfamily. Siderophore-Fe(3+) uptake transporter (SIUT) (TC 3.A.1.21) family. In terms of assembly, forms a heterodimer with IrtB. The cofactor is FAD.

It is found in the cell inner membrane. Functionally, part of the ABC transporter complex IrtAB involved in the import of iron-bound mycobactin (Fe-MBT) and carboxymycobactin (Fe-cMBT). Has a preference for Fe-MBT over Fe-cMBT. Mycobactins are then reduced by the siderophore interaction domain to facilitate iron release in the bacterial cell. Transmembrane domains (TMD) form a pore in the membrane and the ATP-binding domain (NBD) is responsible for energy generation. This is Mycobactin import ATP-binding/permease protein IrtA from Mycolicibacterium smegmatis (strain ATCC 700084 / mc(2)155) (Mycobacterium smegmatis).